Consider the following 355-residue polypeptide: Peptide chain release factor 1 (355 aa).

At Gln231 the chain carries N5-methylglutamine. Positions 280–291 (SERLAKESEARK) are enriched in basic and acidic residues. Positions 280-303 (SERLAKESEARKSQVGSGDRSERI) are disordered.

The protein belongs to the prokaryotic/mitochondrial release factor family. Post-translationally, methylated by PrmC. Methylation increases the termination efficiency of RF1.

The protein resides in the cytoplasm. In terms of biological role, peptide chain release factor 1 directs the termination of translation in response to the peptide chain termination codons UAG and UAA. The chain is Peptide chain release factor 1 from Campylobacter jejuni (strain RM1221).